The primary structure comprises 373 residues: Geraniol dehydrogenase (373 aa).

Zn(2+)-binding residues include Cys-47, His-67, Cys-96, Cys-99, Cys-102, Cys-110, and Cys-175.

Belongs to the zinc-containing alcohol dehydrogenase family. In terms of assembly, homodimer. Zn(2+) is required as a cofactor.

It carries out the reaction (2E)-geraniol + NAD(+) = (2E)-geranial + NADH + H(+). It catalyses the reaction perillyl alcohol + NAD(+) = perillyl aldehyde + NADH + H(+). Its pathway is terpene metabolism; monoterpene degradation. Its activity is regulated as follows. Is inhibited by EDTA, N-ethylmaleimide, diethylpyrocarbonate, and 1-cyclohexyl-N-(2-morpholinoethyl)carbodiimide in vitro. In terms of biological role, involved in the degradation of the monoterpenes beta-myrcene and limonene. During anaerobic degradation of beta-myrcene, catalyzes the NAD(+)-dependent oxidation of geraniol to geranial. Can also catalyze the oxidation of (S)-perillyl alcohol to perillyl aldehyde, and to a lesser extent, the oxidation of nerol, citronellol, cumic alcohol, and benzyl alcohol. Cannot use NADP(+) instead of NAD(+) as cosubstrate. The sequence is that of Geraniol dehydrogenase from Castellaniella defragrans (strain DSM 12143 / CCUG 39792 / 65Phen) (Alcaligenes defragrans).